Consider the following 349-residue polypeptide: MGTSLLGGVPVAENVPLAPLTTLRVGPVARRLVTCVTTDQIVDAVMAAGPEALILAGGSNVVLAGDAADLTVVRLANTRISVDGDVVRAEAGAGWDDVVAASLAHGLGGLECLSGIPGSAGATPVQNVGAYGAEVADTIRRVRLLERGTGSVRWVSPEFLRFGYRTSVLKHSSQWVVLEVEFGLDAAGHSAPVRYRELATELAVEQGERTDPQRVRAAVLELRARKGMVLDAADHDTWSVGSFFTNPVVSRAEFERIAATVGSAVPNYPAEDGVKLAAGWLVEQAGFGKGYPGADAPARLSTKHALALTNRGTATTADVLALARTVRDGVKAAFGIELTPEPVLVGCSL.

In terms of domain architecture, FAD-binding PCMH-type spans 25–213; the sequence is VGPVARRLVT…VEQGERTDPQ (189 aa). The active site involves Arg-165. Ser-242 serves as the catalytic Proton donor. Glu-341 is an active-site residue.

The protein belongs to the MurB family. FAD serves as cofactor.

It is found in the cytoplasm. The enzyme catalyses UDP-N-acetyl-alpha-D-muramate + NADP(+) = UDP-N-acetyl-3-O-(1-carboxyvinyl)-alpha-D-glucosamine + NADPH + H(+). It functions in the pathway cell wall biogenesis; peptidoglycan biosynthesis. In terms of biological role, cell wall formation. The polypeptide is UDP-N-acetylenolpyruvoylglucosamine reductase (Mycolicibacterium gilvum (strain PYR-GCK) (Mycobacterium gilvum (strain PYR-GCK))).